We begin with the raw amino-acid sequence, 57 residues long: Large ribosomal subunit protein bL32B (57 aa).

The protein belongs to the bacterial ribosomal protein bL32 family.

The chain is Large ribosomal subunit protein bL32B (rpmF2) from Listeria innocua serovar 6a (strain ATCC BAA-680 / CLIP 11262).